Here is a 376-residue protein sequence, read N- to C-terminus: uncharacterized protein (376 aa).

It belongs to the YCR102c/YLR460c/YNL134c family.

This is an uncharacterized protein from Saccharomyces cerevisiae (strain ATCC 204508 / S288c) (Baker's yeast).